Reading from the N-terminus, the 71-residue chain is Small ribosomal subunit protein bS21 (71 aa).

This sequence belongs to the bacterial ribosomal protein bS21 family.

The chain is Small ribosomal subunit protein bS21 from Buchnera aphidicola subsp. Acyrthosiphon pisum (strain 5A).